A 584-amino-acid polypeptide reads, in one-letter code: Leucine-rich repeat and fibronectin type III domain-containing protein 1 (584 aa).

The N-terminal stretch at 1–17 (MERLVFCVLVFGALAKA) is a signal peptide. The region spanning 18-51 (QLCPGRCICQTISPTLTLLCAKTGLLFVPPTVDR) is the LRRNT domain. The Extracellular portion of the chain corresponds to 18–494 (QLCPGRCICQ…VPSQFLGGTM (477 aa)). 7 LRR repeats span residues 52 to 73 (KTVE…DFLN), 76 to 97 (SLVH…AFMG), 100 to 121 (SLRA…QLKG), 124 to 145 (NLRH…SFDE), 149 to 170 (TIED…AIAR), 173 to 194 (NINT…TFTL), and 197 to 218 (KLVR…TLFQ). Residue asparagine 73 is glycosylated (N-linked (GlcNAc...) asparagine). The region spanning 241–287 (NPLHCNCELLWLRRLTREDDLETCASPEHLMDKYFWSIQEEEFICEP) is the LRRCT domain. Residues 288-375 (PLITKHQVTK…GIATAAVHVH (88 aa)) form the Ig-like domain. An intrachain disulfide couples cysteine 310 to cysteine 359. 5 N-linked (GlcNAc...) asparagine glycosylation sites follow: asparagine 332, asparagine 341, asparagine 384, asparagine 408, and asparagine 421. A disordered region spans residues 393–414 (DPGLSDISTSSRSSSNDSKTHS). Low complexity predominate over residues 397–409 (SDISTSSRSSSND). The chain crosses the membrane as a helical span at residues 495 to 515 (IIIIGGIIVASVLVFIIILMI). Topologically, residues 516 to 584 (RYKAYSGGGG…MVLPILHLLF (69 aa)) are cytoplasmic. The interval 539–564 (HVHSQTNGSRSAATKQSEEPPESPAG) is disordered. Polar residues predominate over residues 540 to 553 (VHSQTNGSRSAATK).

This sequence belongs to the LRFN family.

It is found in the membrane. The protein localises to the synapse. In terms of biological role, involved in the regulation of excitatory synapses. The protein is Leucine-rich repeat and fibronectin type III domain-containing protein 1 (lrfn1) of Danio rerio (Zebrafish).